Here is a 144-residue protein sequence, read N- to C-terminus: Large ribosomal subunit protein uL15 (144 aa).

Residues 1–44 form a disordered region; sequence MNLNELQPAAGSRKLRNRVGRGTSSGNGKTSGRGQKGQKARGKV. Residues 23–35 show a composition bias toward gly residues; that stretch reads TSSGNGKTSGRGQ.

This sequence belongs to the universal ribosomal protein uL15 family. As to quaternary structure, part of the 50S ribosomal subunit.

Its function is as follows. Binds to the 23S rRNA. The polypeptide is Large ribosomal subunit protein uL15 (Leuconostoc citreum (strain KM20)).